We begin with the raw amino-acid sequence, 173 residues long: Bifunctional protein PyrR (173 aa).

The short motif at Val-93–Thr-105 is the PRPP-binding element.

The protein belongs to the purine/pyrimidine phosphoribosyltransferase family. PyrR subfamily. In terms of assembly, homodimer and homohexamer; in equilibrium.

The catalysed reaction is UMP + diphosphate = 5-phospho-alpha-D-ribose 1-diphosphate + uracil. Regulates transcriptional attenuation of the pyrimidine nucleotide (pyr) operon by binding in a uridine-dependent manner to specific sites on pyr mRNA. This disrupts an antiterminator hairpin in the RNA and favors formation of a downstream transcription terminator, leading to a reduced expression of downstream genes. Functionally, also displays a weak uracil phosphoribosyltransferase activity which is not physiologically significant. The chain is Bifunctional protein PyrR from Streptococcus uberis (strain ATCC BAA-854 / 0140J).